The primary structure comprises 396 residues: Phosphoglycerate kinase (396 aa).

Residues 21-23 (DLN), Arg-36, 59-62 (HLGR), Arg-113, and Arg-146 contribute to the substrate site. ATP is bound by residues Lys-197, Glu-319, and 345-348 (GGDT).

The protein belongs to the phosphoglycerate kinase family. In terms of assembly, monomer.

The protein resides in the cytoplasm. The enzyme catalyses (2R)-3-phosphoglycerate + ATP = (2R)-3-phospho-glyceroyl phosphate + ADP. Its pathway is carbohydrate degradation; glycolysis; pyruvate from D-glyceraldehyde 3-phosphate: step 2/5. The polypeptide is Phosphoglycerate kinase (Legionella pneumophila (strain Corby)).